The primary structure comprises 456 residues: Nuclear distribution protein PAC1 (456 aa).

Residues 9-41 (QADELHKSIIAYLSANDLPNTAAALRAELNLTE) enclose the LisH domain. Residues 61-88 (TSIVRLQKKIMDLEARNAALQSELDNLT) adopt a coiled-coil conformation. WD repeat units lie at residues 114 to 153 (SHRDTINCIAFHPKFSSLASGSDDFTIKIWDWELGELEMT), 156 to 197 (GHTR…KNVR), 201 to 240 (GHDHSVSAVRFIPCRNLLASASRDKDVRIWDVTTGYCVRS), 243 to 282 (GHTGWVRDVCPSFDGNFLFSSGDDMTARLWDISAIPNPEN), 288 to 348 (GHEH…LMTL), 350 to 389 (GHDNWVRGIVFHPAGKYLLSVSDDRTLRCWDLSQEGKCVK), 394 to 437 (AHDR…PDVQ), and 439 to 456 (RCVIATGSVDRKLQIFAA).

It belongs to the WD repeat LIS1/nudF family. In terms of assembly, self-associates. Interacts with NDL1 and dynein.

It is found in the cytoplasm. The protein resides in the cytoskeleton. The protein localises to the spindle pole. Positively regulates the activity of the minus-end directed microtubule motor protein dynein. May enhance dynein-mediated microtubule sliding by targeting dynein to the microtubule plus end. Required for nuclear migration during vegetative growth as well as development. Required for retrograde early endosome (EE) transport from the hyphal tip. Required for localization of dynein to the mitotic spindle poles. Recruits additional proteins to the dynein complex at SPBs. This chain is Nuclear distribution protein PAC1, found in Ajellomyces capsulatus (strain H143) (Darling's disease fungus).